The following is a 452-amino-acid chain: Phosphatidylinositol N-acetylglucosaminyltransferase GPI3 subunit (452 aa).

A helical transmembrane segment spans residues 407 to 427 (LYLLCGIVEYMLFFLLEWLYP).

Belongs to the glycosyltransferase group 1 family. In terms of assembly, component of the phosphatidylinositol N-acetylglucosaminyltransferase complex composed of at least GPI1, GPI2, GPI3, GPI15, GPI19 and ERI1.

It localises to the endoplasmic reticulum membrane. It carries out the reaction a 1,2-diacyl-sn-glycero-3-phospho-(1D-myo-inositol) + UDP-N-acetyl-alpha-D-glucosamine = a 6-(N-acetyl-alpha-D-glucosaminyl)-1-(1,2-diacyl-sn-glycero-3-phospho)-1D-myo-inositol + UDP + H(+). It functions in the pathway glycolipid biosynthesis; glycosylphosphatidylinositol-anchor biosynthesis. Inhibited by Ras, probably via the interaction between RAS2 and ERI1. Its function is as follows. Catalytic subunit in the complex catalyzing the transfer of N-acetylglucosamine from UDP-N-acetylglucosamine to phosphatidylinositol, the first step of GPI biosynthesis. This chain is Phosphatidylinositol N-acetylglucosaminyltransferase GPI3 subunit (SPT14), found in Saccharomyces cerevisiae (strain RM11-1a) (Baker's yeast).